The following is a 529-amino-acid chain: MSPSEYALEVAKRRTFAIISHPDAGKTTITEKVLLFGNAIQTAGTVKGRGSSHHAKSDWMEMEKQRGISITTSVMQFPYGGCLVNLLDTPGHEDFSEDTYRTLTAVDCCLMVIDAAKGVEDRTRKLMEVTRLRDTPILTFMNKLDRDIRDPMEVLDEVERELKIACSPITWPIGCGKLFKGVYHLYKDETYLYQTGKGHTIQEVRIVKGLNNPDLDVAVGEDLAKQFRQELELVQGASHEFDHDAFLSGDLTPVFFGTALGNFGVDHMLDGLVEWAPAPMPRQTDTREVVAAEEKFTGFVFKIQANMDPKHRDRVAFLRVVSGRFEKGMKLRQVRTKKDVVISDALTFMAGDRSHLEEAYAGDIIGLHNHGTIQIGDTFTQGEDMKFTGIPNFAPELFRRIRLRDPLKQKQLLKGLVQLSEEGAVQVFRPLTNNDLIVGAVGVLQFEVVSSRLKSEYNVEAVYESVNVSTARWVECDDVKKFEEFKRKNEVNLALDGGDNLSYIAPTMVNLNITQERYPEVRFRKTREH.

The region spanning 11–280 is the tr-type G domain; it reads AKRRTFAIIS…GLVEWAPAPM (270 aa). Residues 20–27, 88–92, and 142–145 contribute to the GTP site; these read SHPDAGKT, DTPGH, and NKLD.

It belongs to the TRAFAC class translation factor GTPase superfamily. Classic translation factor GTPase family. PrfC subfamily.

It localises to the cytoplasm. Increases the formation of ribosomal termination complexes and stimulates activities of RF-1 and RF-2. It binds guanine nucleotides and has strong preference for UGA stop codons. It may interact directly with the ribosome. The stimulation of RF-1 and RF-2 is significantly reduced by GTP and GDP, but not by GMP. The chain is Peptide chain release factor 3 from Yersinia enterocolitica serotype O:8 / biotype 1B (strain NCTC 13174 / 8081).